We begin with the raw amino-acid sequence, 243 residues long: Phosphoadenosine 5'-phosphosulfate reductase (243 aa).

Cys239 (nucleophile; cysteine thiosulfonate intermediate) is an active-site residue.

The protein belongs to the PAPS reductase family. CysH subfamily.

It is found in the cytoplasm. The enzyme catalyses [thioredoxin]-disulfide + sulfite + adenosine 3',5'-bisphosphate + 2 H(+) = [thioredoxin]-dithiol + 3'-phosphoadenylyl sulfate. The protein operates within sulfur metabolism; hydrogen sulfide biosynthesis; sulfite from sulfate: step 3/3. Its function is as follows. Catalyzes the formation of sulfite from phosphoadenosine 5'-phosphosulfate (PAPS) using thioredoxin as an electron donor. This is Phosphoadenosine 5'-phosphosulfate reductase from Proteus mirabilis (strain HI4320).